The primary structure comprises 326 residues: tRNA U34 carboxymethyltransferase (326 aa).

Carboxy-S-adenosyl-L-methionine-binding residues include Lys-91, Trp-105, Lys-110, Gly-130, Met-196, Tyr-200, and Arg-315.

The protein belongs to the class I-like SAM-binding methyltransferase superfamily. CmoB family. In terms of assembly, homotetramer.

It catalyses the reaction carboxy-S-adenosyl-L-methionine + 5-hydroxyuridine(34) in tRNA = 5-carboxymethoxyuridine(34) in tRNA + S-adenosyl-L-homocysteine + H(+). Catalyzes carboxymethyl transfer from carboxy-S-adenosyl-L-methionine (Cx-SAM) to 5-hydroxyuridine (ho5U) to form 5-carboxymethoxyuridine (cmo5U) at position 34 in tRNAs. This Tolumonas auensis (strain DSM 9187 / NBRC 110442 / TA 4) protein is tRNA U34 carboxymethyltransferase.